The following is a 214-amino-acid chain: GTP-binding nuclear protein GSP1/Ran (214 aa).

The Small GTPase Ran-type domain maps to 4-168 (EVAAFKLVLV…LWLARKLAGN (165 aa)). Residue 15–22 (DGGTGKTT) participates in GTP binding. The switch-I stretch occupies residues 34–42 (NRYNATLGV). Residues Gly65, 119–122 (NKVD), and 147–149 (SAK) contribute to the GTP site. Residues 65–81 (GQEKFGGLRDGYYINGQ) are switch-II.

It belongs to the small GTPase superfamily. Ran family. In terms of assembly, found in a nuclear export complex with RanGTP, exportin and pre-miRNA.

Its subcellular location is the nucleus. Functionally, GTP-binding protein involved in nucleocytoplasmic transport. Required for the import of protein into the nucleus and also for RNA export. Involved in chromatin condensation and control of cell cycle. The sequence is that of GTP-binding nuclear protein GSP1/Ran (GSP1) from Yarrowia lipolytica (strain CLIB 122 / E 150) (Yeast).